Consider the following 425-residue polypeptide: Glutamyl-tRNA reductase (425 aa).

Substrate-binding positions include 51–54 (TCNR), Ser-111, 116–118 (DMQ), and Gln-122. The Nucleophile role is filled by Cys-52. An NADP(+)-binding site is contributed by 191-196 (GLGEIG).

The protein belongs to the glutamyl-tRNA reductase family. In terms of assembly, homodimer.

It carries out the reaction (S)-4-amino-5-oxopentanoate + tRNA(Glu) + NADP(+) = L-glutamyl-tRNA(Glu) + NADPH + H(+). Its pathway is porphyrin-containing compound metabolism; protoporphyrin-IX biosynthesis; 5-aminolevulinate from L-glutamyl-tRNA(Glu): step 1/2. Its function is as follows. Catalyzes the NADPH-dependent reduction of glutamyl-tRNA(Glu) to glutamate 1-semialdehyde (GSA). The polypeptide is Glutamyl-tRNA reductase (Cytophaga hutchinsonii (strain ATCC 33406 / DSM 1761 / CIP 103989 / NBRC 15051 / NCIMB 9469 / D465)).